Consider the following 299-residue polypeptide: Pyrroline-5-carboxylate reductase 2 (299 aa).

Belongs to the pyrroline-5-carboxylate reductase family. In terms of assembly, homodecamer; composed of 5 homodimers.

The catalysed reaction is L-proline + NADP(+) = (S)-1-pyrroline-5-carboxylate + NADPH + 2 H(+). It catalyses the reaction L-proline + NAD(+) = (S)-1-pyrroline-5-carboxylate + NADH + 2 H(+). It functions in the pathway amino-acid biosynthesis; L-proline biosynthesis; L-proline from L-glutamate 5-semialdehyde: step 1/1. This chain is Pyrroline-5-carboxylate reductase 2 (pycr2), found in Dictyostelium discoideum (Social amoeba).